Consider the following 99-residue polypeptide: Large ribosomal subunit protein eL21 (99 aa).

Belongs to the eukaryotic ribosomal protein eL21 family.

This Pyrobaculum calidifontis (strain DSM 21063 / JCM 11548 / VA1) protein is Large ribosomal subunit protein eL21.